The primary structure comprises 540 residues: Ipecac alkaloid beta-glucosidase 9 (540 aa).

Residues Gln36, His140, 185 to 186 (NE), Tyr350, Glu421, Trp470, and Phe486 each bind a beta-D-glucoside. The active-site Proton donor is the Glu186. Glu421 functions as the Nucleophile in the catalytic mechanism.

The protein belongs to the glycosyl hydrolase 1 family.

It is found in the cytoplasm. It localises to the cytosol. It carries out the reaction deacetylipecoside + H2O = deacetylipecoside aglycone + D-glucose. The catalysed reaction is deacetylisoipecoside + H2O = deacetylisoipecoside aglycone + D-glucose. It participates in alkaloid biosynthesis. Its function is as follows. Beta-glucosidase catalyzing deglucosylation on N-deacetylisoipecoside and N-deacetylipecoside. In Carapichea ipecacuanha (Ipecac), this protein is Ipecac alkaloid beta-glucosidase 9.